A 1282-amino-acid chain; its full sequence is ATP-dependent helicase/nuclease subunit A (1282 aa).

Residues 10 to 481 (SKWTDSQRQV…IELQENFRSS (472 aa)) enclose the UvrD-like helicase ATP-binding domain. 31-38 (AGAGAGKT) provides a ligand contact to ATP. Residues 516-820 (KPRELYLNED…RLMSIHKSKG (305 aa)) form the UvrD-like helicase C-terminal domain.

This sequence belongs to the helicase family. AddA subfamily. As to quaternary structure, heterodimer of AddA and AddB/RexB. Requires Mg(2+) as cofactor.

The enzyme catalyses Couples ATP hydrolysis with the unwinding of duplex DNA by translocating in the 3'-5' direction.. It carries out the reaction ATP + H2O = ADP + phosphate + H(+). Its function is as follows. The heterodimer acts as both an ATP-dependent DNA helicase and an ATP-dependent, dual-direction single-stranded exonuclease. Recognizes the chi site generating a DNA molecule suitable for the initiation of homologous recombination. The AddA nuclease domain is required for chi fragment generation; this subunit has the helicase and 3' -&gt; 5' nuclease activities. This chain is ATP-dependent helicase/nuclease subunit A, found in Natranaerobius thermophilus (strain ATCC BAA-1301 / DSM 18059 / JW/NM-WN-LF).